Here is a 101-residue protein sequence, read N- to C-terminus: Replication restart protein PriB (101 aa).

One can recognise an SSB domain in the interval 1–101 (MTTNNLVLSG…IHAENVELKT (101 aa)).

This sequence belongs to the PriB family. In terms of assembly, homodimer. Interacts with PriA and DnaT. Component of the replication restart primosome. Primosome assembly occurs via a 'hand-off' mechanism. PriA binds to replication forks, subsequently PriB then DnaT bind; DnaT then displaces ssDNA to generate the helicase loading substrate.

Its function is as follows. Involved in the restart of stalled replication forks, which reloads the replicative helicase on sites other than the origin of replication; the PriA-PriB pathway is the major replication restart pathway. During primosome assembly it facilitates complex formation between PriA and DnaT on DNA; stabilizes PriA on DNA. Stimulates the DNA unwinding activity of PriA helicase. This chain is Replication restart protein PriB, found in Shewanella oneidensis (strain ATCC 700550 / JCM 31522 / CIP 106686 / LMG 19005 / NCIMB 14063 / MR-1).